The following is a 506-amino-acid chain: Adenylosuccinate synthetase (506 aa).

GTP contacts are provided by residues 35-41 (GDEGKGK) and 63-65 (GHT). Asp-36 functions as the Proton acceptor in the catalytic mechanism. Mg(2+) is bound by residues Asp-36 and Gly-63. IMP contacts are provided by residues 36–39 (DEGK), 61–64 (NAGH), Thr-212, Arg-226, Asn-304, Thr-319, and Arg-383. His-64 acts as the Proton donor in catalysis. 379 to 385 (VTTKRKR) lines the substrate pocket. Residues Arg-385, 411–413 (KLD), and 494–496 (GVG) each bind GTP.

The protein belongs to the adenylosuccinate synthetase family. In terms of assembly, homodimer. Requires Mg(2+) as cofactor.

The protein resides in the cytoplasm. The catalysed reaction is IMP + L-aspartate + GTP = N(6)-(1,2-dicarboxyethyl)-AMP + GDP + phosphate + 2 H(+). It participates in purine metabolism; AMP biosynthesis via de novo pathway; AMP from IMP: step 1/2. Functionally, plays an important role in the de novo pathway and in the salvage pathway of purine nucleotide biosynthesis. Catalyzes the first committed step in the biosynthesis of AMP from IMP. The chain is Adenylosuccinate synthetase from Drosophila yakuba (Fruit fly).